Consider the following 521-residue polypeptide: MSASEGMKFKFHSGEKVLCFEPDPTKARVLYDAKIVDVIVGKDEKGRKIPEYLIHFNGWNRSWDRWAAEDHVLRDTDENRRLQRKLARKAVARLRSTGRKKKRCRLPGVDSVLKGLPTEEKDENDENSLSSSSDCSENKDEEISEESDIEEKTEVKEEPELQTRREMEERTITIEIPEVLKKQLEDDCYYINRRKRLVKLPCQTNIITILESYVKHFAINAAFSANERPRHHHVMPHANMNVHYIPAEKNVDLCKEMVDGLRITFDYTLPLVLLYPYEQAQYKKVTSSKFFLPIKESATSTNRSQEELSPSPPLLNPSTPQSTESQPTTGEPATPKRRKAEPEALQSLRRSTRHSANCDRLSESSASPQPKRRQQDTSASMPKLFLHLEKKTPVHSRSSSPIPLTPSKEGSAVFAGFEGRRTNEINEVLSWKLVPDNYPPGDQPPPPSYIYGAQHLLRLFVKLPEILGKMSFSEKNLKALLKHFDLFLRFLAEYHDDFFPESAYVAACEAHYSTKNPRAIY.

Residues S13–H71 form the Tudor-knot domain. Disordered regions lie at residues K114–E166 and A298–E409. Acidic residues predominate over residues K139 to I149. Over residues E150–E166 the composition is skewed to basic and acidic residues. In terms of domain architecture, MRG spans E168–P517. A required for the histone acetyltransferase activity of the MSL complex region spans residues F290 to P440. Phosphoserine is present on residues S309 and S311. Low complexity predominate over residues N316–T329. Residues S367 and S400 each carry the phosphoserine modification. Phosphothreonine is present on T405. A phosphoserine mark is found at S407 and S411.

As to quaternary structure, component of the MSL histone acetyltransferase complex at least composed of the KAT8/MOF, MSL1/hampin, MSL2 and MSL3. Interacts (via the MRG domain) with MSL1 and KAT8/MOF. Expressed in many tissues including liver, pancreas, heart, lung, kidney, skeletal muscle, brain, and placenta, with highest expression in skeletal muscle and heart.

The protein localises to the nucleus. In terms of biological role, non-catalytic component of the MSL histone acetyltransferase complex, a multiprotein complex that mediates the majority of histone H4 acetylation at 'Lys-16' (H4K16ac), an epigenetic mark that prevents chromatin compaction. The MSL complex is required for chromosome stability and genome integrity by maintaining homeostatic levels of H4K16ac. The MSL complex is also involved in gene dosage by promoting up-regulation of genes expressed by the X chromosome. X up-regulation is required to compensate for autosomal biallelic expression. The MSL complex also participates in gene dosage compensation by promoting expression of Tsix non-coding RNA. Acts as a histone reader that specifically recognizes and binds histone H4 monomethylated at 'Lys-20' (H4K20Me1) in a DNA-dependent manner and is proposed to be involved in chromosomal targeting of the MSL complex. May play a role X inactivation in females. The polypeptide is MSL complex subunit 3 (Homo sapiens (Human)).